Consider the following 168-residue polypeptide: Shikimate kinase (168 aa).

11 to 16 lines the ATP pocket; the sequence is GAGKTT. A Mg(2+)-binding site is contributed by threonine 15. Substrate is bound by residues aspartate 33, arginine 57, and glycine 78. Arginine 118 serves as a coordination point for ATP. Arginine 136 serves as a coordination point for substrate. Residue arginine 153 participates in ATP binding.

It belongs to the shikimate kinase family. Monomer. It depends on Mg(2+) as a cofactor.

It localises to the cytoplasm. The catalysed reaction is shikimate + ATP = 3-phosphoshikimate + ADP + H(+). It participates in metabolic intermediate biosynthesis; chorismate biosynthesis; chorismate from D-erythrose 4-phosphate and phosphoenolpyruvate: step 5/7. Catalyzes the specific phosphorylation of the 3-hydroxyl group of shikimic acid using ATP as a cosubstrate. This chain is Shikimate kinase, found in Enterococcus faecalis (strain ATCC 700802 / V583).